Reading from the N-terminus, the 62-residue chain is DNA-directed RNA polymerase subunit Rpo10 (62 aa).

Cysteine 6, cysteine 9, cysteine 43, and cysteine 44 together coordinate Zn(2+).

Belongs to the archaeal Rpo10/eukaryotic RPB10 RNA polymerase subunit family. Part of the RNA polymerase complex. Requires Zn(2+) as cofactor.

The protein localises to the cytoplasm. It carries out the reaction RNA(n) + a ribonucleoside 5'-triphosphate = RNA(n+1) + diphosphate. In terms of biological role, DNA-dependent RNA polymerase (RNAP) catalyzes the transcription of DNA into RNA using the four ribonucleoside triphosphates as substrates. This Methanosarcina mazei (strain ATCC BAA-159 / DSM 3647 / Goe1 / Go1 / JCM 11833 / OCM 88) (Methanosarcina frisia) protein is DNA-directed RNA polymerase subunit Rpo10.